Reading from the N-terminus, the 714-residue chain is WD repeat and coiled-coil-containing protein (714 aa).

WD repeat units follow at residues 55–98 and 154–194; these read GQFE…LEQN and KGSG…LVPC. Disordered regions lie at residues 432 to 454 and 531 to 564; these read EEST…SENF and QASR…KEKN. A coiled-coil region spans residues 567-595; it reads QLTQNMERIFTRFAEVQQCLSEIREFTQN. The interval 685–714 is disordered; it reads RSARRKSPARPPSGADDFPPESPKSPSMEK.

This is WD repeat and coiled-coil-containing protein (wdcp) from Danio rerio (Zebrafish).